The chain runs to 560 residues: Nucleoprotein (560 aa).

Residues 54-236 (LRKSKRGDTD…ITKDESALNI (183 aa)) form a binding site for the cap structure m7GTP region. Mn(2+) contacts are provided by D380 and E382. Zn(2+) is bound by residues E390, C497, H500, and C521. D525 serves as a coordination point for Mn(2+).

This sequence belongs to the arenaviridae nucleocapsid protein family. As to quaternary structure, homomultimerizes to form the nucleocapsid. Binds to viral genomic RNA. Interacts with glycoprotein G2. Interacts with protein Z; this interaction probably directs the encapsidated genome to budding sites. Interacts with protein L; this interaction does not interfere with Z-L interaction. Interacts with host IKBKE (via Protein kinase domain); the interaction inhibits IKBKE kinase activity.

Its subcellular location is the virion. The protein resides in the host cytoplasm. Functionally, encapsidates the genome, protecting it from nucleases. The encapsidated genomic RNA is termed the nucleocapsid (NC). Serves as template for viral transcription and replication. The increased presence of protein N in host cell does not seem to trigger the switch from transcription to replication as observed in other negative strain RNA viruses. Through the interaction with host IKBKE, strongly inhibits the phosphorylation and nuclear translocation of host IRF3, a protein involved in interferon activation pathway, leading to the inhibition of interferon-beta and IRF3-dependent promoters activation. Also encodes a functional 3'-5' exoribonuclease that degrades preferentially dsRNA substrates and thereby participates in the suppression of interferon induction. The polypeptide is Nucleoprotein (Homo sapiens (Human)).